Consider the following 305-residue polypeptide: tRNA pseudouridine synthase B (305 aa).

D39 (nucleophile) is an active-site residue.

The protein belongs to the pseudouridine synthase TruB family. Type 1 subfamily.

It carries out the reaction uridine(55) in tRNA = pseudouridine(55) in tRNA. Functionally, responsible for synthesis of pseudouridine from uracil-55 in the psi GC loop of transfer RNAs. In Staphylococcus aureus (strain MW2), this protein is tRNA pseudouridine synthase B.